A 190-amino-acid polypeptide reads, in one-letter code: dCTP deaminase, dUMP-forming (190 aa).

DCTP is bound by residues lysine 101–arginine 106, aspartate 119, threonine 127–glutamate 129, glutamine 148, tyrosine 162, and glutamine 174. The Proton donor/acceptor role is filled by glutamate 129. The interval glycine 163 to threonine 190 is disordered. Residues tyrosine 171–threonine 190 show a composition bias toward polar residues.

It belongs to the dCTP deaminase family. Homotrimer.

It catalyses the reaction dCTP + 2 H2O = dUMP + NH4(+) + diphosphate. It participates in pyrimidine metabolism; dUMP biosynthesis; dUMP from dCTP: step 1/1. Functionally, bifunctional enzyme that catalyzes both the deamination of dCTP to dUTP and the hydrolysis of dUTP to dUMP without releasing the toxic dUTP intermediate. In Mycobacterium avium (strain 104), this protein is dCTP deaminase, dUMP-forming.